The chain runs to 522 residues: Cytochrome P450 4e5, mitochondrial (522 aa).

Residues glutamate 307 and cysteine 443 each contribute to the heme site.

Belongs to the cytochrome P450 family. Requires heme as cofactor.

It is found in the mitochondrion. Probably involved in steroid hormones biosynthesis. The sequence is that of Cytochrome P450 4e5, mitochondrial (Cyp4e5) from Drosophila mettleri (Fruit fly).